We begin with the raw amino-acid sequence, 269 residues long: Aminoglycoside N(3)-acetyltransferase III (269 aa).

Belongs to the antibiotic N-acetyltransferase family.

The catalysed reaction is a 2-deoxystreptamine antibiotic + acetyl-CoA = an N(3)-acetyl-2-deoxystreptamine antibiotic + CoA + H(+). Resistance to antibiotics containing the 2-deoxy-streptamine ring including gentamicin, kanamycin, tobramycin, neomycin and apramycin. The chain is Aminoglycoside N(3)-acetyltransferase III (aac3-Vb) from Serratia marcescens.